We begin with the raw amino-acid sequence, 686 residues long: ATP-dependent zinc metalloprotease FtsH 2 (686 aa).

The Cytoplasmic portion of the chain corresponds to 1-11 (MKKNIKDIFKN). Residues 12-32 (FNIFWFCFIFLLLSLLYCLIM) form a helical membrane-spanning segment. Over 33-178 (MEISHQHDNN…LQRIPYQPYF (146 aa)) the chain is Extracellular. A helical transmembrane segment spans residues 179-199 (GFAPFISAVNICILIIIFYFI). The Cytoplasmic portion of the chain corresponds to 200 to 686 (YNSIEKTSAQ…QKSEKEDCNK (487 aa)). An ATP-binding site is contributed by 272-279 (GPPGVGKT). Histidine 493 contacts Zn(2+). Glutamate 494 is a catalytic residue. 2 residues coordinate Zn(2+): histidine 497 and aspartate 569.

In the central section; belongs to the AAA ATPase family. The protein in the C-terminal section; belongs to the peptidase M41 family. As to quaternary structure, homohexamer. Zn(2+) is required as a cofactor.

Its subcellular location is the cell membrane. In terms of biological role, acts as a processive, ATP-dependent zinc metallopeptidase for both cytoplasmic and membrane proteins. Plays a role in the quality control of integral membrane proteins. The protein is ATP-dependent zinc metalloprotease FtsH 2 of Phytoplasma mali (strain AT).